A 288-amino-acid chain; its full sequence is Syntaxin-1B (288 aa).

Residues 1–13 (MKDRTQELRSAKD) show a composition bias toward basic and acidic residues. The disordered stretch occupies residues 1-20 (MKDRTQELRSAKDSDDEEEV). The Cytoplasmic portion of the chain corresponds to 1–264 (MKDRTQELRS…KYQSKARRKK (264 aa)). 2 positions are modified to phosphoserine: Ser10 and Ser14. Residues 29-104 (MDEFFEQVEE…IEQSIEQEEG (76 aa)) adopt a coiled-coil conformation. The t-SNARE coiled-coil homology domain occupies 191-253 (LNEIETRHNE…ERAVSDTKKA (63 aa)). Residues 265-288 (IMIIICCVVLGVVLASSIGGTLGL) traverse the membrane as a helical; Anchor for type IV membrane protein segment.

The protein belongs to the syntaxin family. As to quaternary structure, interacts with OTOF. Interacts with SYT6 and SYT8; the interaction is Ca(2+)-dependent. In terms of processing, phosphorylated by CK2.

It is found in the membrane. Its subcellular location is the nucleus. The protein localises to the cytoplasm. The protein resides in the cytoskeleton. It localises to the microtubule organizing center. It is found in the centrosome. Its subcellular location is the spindle. Potentially involved in docking of synaptic vesicles at presynaptic active zones. May mediate Ca(2+)-regulation of exocytosis acrosomal reaction in sperm. This is Syntaxin-1B (STX1B) from Homo sapiens (Human).